Reading from the N-terminus, the 521-residue chain is Tigger transposable element-derived protein 6 (521 aa).

Positions 3-54 constitute an HTH psq-type domain; sequence NKGNKKRRQFSLEEKMKVVGAVDSGKRKGDVAKEFGITPSTLSTFLKDRTKF. 2 DNA-binding regions (H-T-H motif) span residues 30–50 and 99–130; these read KGDVAKEFGITPSTLSTFLKD and SVIRKKALNLANMLGYDNFQASVGWLNRFRDR. The 72-residue stretch at 66-137 folds into the HTH CENPB-type domain; it reads QRKRMRSALY…RDRHGIALKA (72 aa). The DDE-1 domain maps to 170 to 372; the sequence is YSPDDIFNAD…VKPSTVVKCW (203 aa).

Belongs to the tigger transposable element derived protein family.

The protein localises to the nucleus. This chain is Tigger transposable element-derived protein 6 (TIGD6), found in Homo sapiens (Human).